The sequence spans 410 residues: MNTQLNNLILPIYMDYQATTPLDPRVMEAMLPYFTTKFGNPHSRSHSFGWEAENAVEEARGDIAKLIGAEAKEIIFTSGATESNNLAIKGIAKFYGNKKNHIITVVSEHKCVLDACRHLEQEGVKVTYLPIKPNGIIDLEVLKNAITDQTMLVSVMAVNNEIGVIQPLKEIGKICREKGVFFHSDIAQGFGKVPIDVNECNIDLASISGHKIYGPKGIGALYVRKKPRVRITPLINGGGQERGMRSGTLPTPLIVGLGTAANIAYNEMEKDTKHVNHLFDKFLDAINSQISEVYLNGDKDQRYKGNLNLSFAGVEGESIILAIKDLAVSSGSACTSASLEPSYVLRSMGVDEELAHTSIRFGIGRFTTEQEIDYAVKLICSKINKLRDLSPLWEMMQEGIDLKKIKWATH.

Pyridoxal 5'-phosphate-binding positions include alanine 80–threonine 81, asparagine 160, glutamine 188, and serine 208–histidine 210. Residue lysine 211 is modified to N6-(pyridoxal phosphate)lysine. Threonine 248 contacts pyridoxal 5'-phosphate. Residue cysteine 334 is the Cysteine persulfide intermediate of the active site. Position 334 (cysteine 334) interacts with [2Fe-2S] cluster.

It belongs to the class-V pyridoxal-phosphate-dependent aminotransferase family. NifS/IscS subfamily. Homodimer. Forms a heterotetramer with IscU, interacts with other sulfur acceptors. It depends on pyridoxal 5'-phosphate as a cofactor.

The protein resides in the cytoplasm. It carries out the reaction (sulfur carrier)-H + L-cysteine = (sulfur carrier)-SH + L-alanine. It functions in the pathway cofactor biosynthesis; iron-sulfur cluster biosynthesis. Master enzyme that delivers sulfur to a number of partners involved in Fe-S cluster assembly, tRNA modification or cofactor biosynthesis. Catalyzes the removal of elemental sulfur atoms from cysteine to produce alanine. Functions as a sulfur delivery protein for Fe-S cluster synthesis onto IscU, an Fe-S scaffold assembly protein, as well as other S acceptor proteins. The sequence is that of Cysteine desulfurase IscS from Rickettsia bellii (strain OSU 85-389).